The following is a 50-amino-acid chain: Sperm protamine P1 (50 aa).

This sequence belongs to the protamine P1 family. In terms of tissue distribution, testis.

The protein resides in the nucleus. It localises to the chromosome. Protamines substitute for histones in the chromatin of sperm during the haploid phase of spermatogenesis. They compact sperm DNA into a highly condensed, stable and inactive complex. The chain is Sperm protamine P1 (PRM1) from Trachypithecus vetulus (Purple-faced langur).